We begin with the raw amino-acid sequence, 481 residues long: Trigger factor (481 aa).

Positions 174-261 (GDIAVVGFKG…LKDLKTRELP (88 aa)) constitute a PPIase FKBP-type domain. A disordered region spans residues 430–481 (ENSTVTEKAPEAESDAAKASKPAAAKKDASKAKTAKTSKAKTAKAESESAES). Residues 437–447 (KAPEAESDAAK) are compositionally biased toward basic and acidic residues. The span at 462–471 (KTAKTSKAKT) shows a compositional bias: basic residues. The span at 472 to 481 (AKAESESAES) shows a compositional bias: basic and acidic residues.

The protein belongs to the FKBP-type PPIase family. Tig subfamily.

Its subcellular location is the cytoplasm. The enzyme catalyses [protein]-peptidylproline (omega=180) = [protein]-peptidylproline (omega=0). Functionally, involved in protein export. Acts as a chaperone by maintaining the newly synthesized protein in an open conformation. Functions as a peptidyl-prolyl cis-trans isomerase. This chain is Trigger factor, found in Synechococcus sp. (strain WH7803).